We begin with the raw amino-acid sequence, 410 residues long: Peptidase T (410 aa).

His-79 contributes to the Zn(2+) binding site. Asp-81 is an active-site residue. Asp-142 is a Zn(2+) binding site. Catalysis depends on Glu-176, which acts as the Proton acceptor. The Zn(2+) site is built by Glu-177, Asp-199, and His-381.

This sequence belongs to the peptidase M20B family. Zn(2+) serves as cofactor.

The protein localises to the cytoplasm. The enzyme catalyses Release of the N-terminal residue from a tripeptide.. Functionally, cleaves the N-terminal amino acid of tripeptides. The chain is Peptidase T from Bacillus mycoides (strain KBAB4) (Bacillus weihenstephanensis).